The following is a 794-amino-acid chain: 6-hydroxypseudooxynicotine dehydrogenase complex subunit gamma (794 aa).

Heterohexamer of 2 alpha (kdhA), 2 beta (kdhB) and 2 gamma (kdhC) subunit. Dimer of heterotrimers. It depends on Mo-molybdopterin cytosine dinucleotide as a cofactor.

The catalysed reaction is 6-hydroxypseudooxynicotine + A + H2O = 2,6-dihydroxypseudooxynicotine + AH2. The protein operates within alkaloid degradation; nicotine degradation. Molybdo-flavoprotein enzyme complex involved in nicotine degradation. The subunit gamma (large subunit) contains the substrate-binding sites, the subunit alpha (medium subunit) binds FAD and the subunit beta (small subunit) has a 2Fe-2S ferredoxin-type domain which binds 2 2Fe-2S clusters. This chain is 6-hydroxypseudooxynicotine dehydrogenase complex subunit gamma (kdhC), found in Paenarthrobacter nicotinovorans (Arthrobacter nicotinovorans).